The chain runs to 382 residues: Neuropeptide Y receptor type 2 (382 aa).

Positions 1–39 (MGPIGAEADENQTVEEMKMEPSGPGHTTPRGELAPDSEP) are disordered. Residues 1-46 (MGPIGAEADENQTVEEMKMEPSGPGHTTPRGELAPDSEPELKDSTK) are Extracellular-facing. N-linked (GlcNAc...) asparagine glycosylation is present at asparagine 11. Residues 47 to 67 (LIEVQIILILAYCSIILLGVV) traverse the membrane as a helical segment. Over 68 to 87 (GNSLVIHVVIKFKSMRTVTN) the chain is Cytoplasmic. The chain crosses the membrane as a helical span at residues 88 to 108 (FFIANLAVADLLVNTLCLPFT). Residues 109–125 (LTYTLMGEWKMGPVLCH) are Extracellular-facing. The cysteines at positions 124 and 204 are disulfide-linked. The helical transmembrane segment at 126 to 146 (LVPYAQGLAVQVSTITLTVIA) threads the bilayer. Topologically, residues 147 to 166 (LDRHRCIVYHLESKISKRIS) are cytoplasmic. A helical membrane pass occupies residues 167 to 187 (FLIIGLAWGISALLASPLAIF). The Extracellular segment spans residues 188 to 217 (REYSLIEIIPDFEIVACTEKWPGEEKSIYG). Residues 218–238 (TVYSLSSLLILYVLPLGIISF) traverse the membrane as a helical segment. Topologically, residues 239–269 (SYARIWSKLKNHVSPGGVNDHYHQRRQKTTK) are cytoplasmic. A helical membrane pass occupies residues 270–290 (MLVCVVVVFAVSWLPLHAFQL). Residues 291–305 (AVDIDSQVLDLKEYK) are Extracellular-facing. The helical transmembrane segment at 306–326 (LIFTVFHIIAMCSTFANPLLY) threads the bilayer. Residues 327 to 382 (GWMNSNYRKAFLSAFRCEQRLDAIHSEVSMTSKAKKNLEATKNGGPDDSFTEATNV) lie on the Cytoplasmic side of the membrane. A lipid anchor (S-palmitoyl cysteine) is attached at cysteine 343. Residues 363–382 (NLEATKNGGPDDSFTEATNV) are disordered.

Belongs to the G-protein coupled receptor 1 family.

It localises to the cell membrane. Functionally, receptor for neuropeptide Y and peptide YY. This is Neuropeptide Y receptor type 2 (NPY2R) from Sus scrofa (Pig).